A 47-amino-acid polypeptide reads, in one-letter code: Capistruin (47 aa).

Residues 1 to 28 (MVRLLAKLLRSTIHGSNGVSLDAVSSTH) constitute a propeptide that is removed on maturation. The isoaspartyl glycine isopeptide (Gly-Asp) cross-link spans 29–37 (GTPGFQTPD).

Post-translationally, it is assumed that the two processing enzymes CapB/CapC convert the precursor protein CapA into the mature lasso peptide capistruin. CapB is assumed to cleave the precursor protein CapA and to set an N-terminal Gly free, whose a-NH2 group acts as the nucleophile in the subsequent cyclization reaction. CapC is most likely involved in the side-chain carboxyl group activation of aspartic acid at position 9 generating the electrophile for the condensation reaction. CapD may export capistruin outside of the producing cells.

It is found in the secreted. Functionally, peptide antibiotic that functions through inhibition of the bacterial DNA-dependent RNA polymerase (RNAP). Inhibits transcription by binding in RNAP secondary channel, where it sterically blocks the folding of the trigger loop, which is essential for efficient catalysis. In contrast to MccJ25, does not restrict access of nucleotide substrates to the catalytic center and shows a non-competitive mode of inhibition. Shows activity against closely related Gram-negative Burkholderia and Pseudomonas strains. Is not active against Gram-positive bacteria. The chain is Capistruin from Burkholderia thailandensis (strain ATCC 700388 / DSM 13276 / CCUG 48851 / CIP 106301 / E264).